A 292-amino-acid chain; its full sequence is 4-hydroxy-tetrahydrodipicolinate synthase (292 aa).

Residue Thr-45 participates in pyruvate binding. The Proton donor/acceptor role is filled by Tyr-133. Lys-161 functions as the Schiff-base intermediate with substrate in the catalytic mechanism. Ile-203 contributes to the pyruvate binding site.

It belongs to the DapA family. In terms of assembly, homotetramer; dimer of dimers.

It localises to the cytoplasm. It catalyses the reaction L-aspartate 4-semialdehyde + pyruvate = (2S,4S)-4-hydroxy-2,3,4,5-tetrahydrodipicolinate + H2O + H(+). The protein operates within amino-acid biosynthesis; L-lysine biosynthesis via DAP pathway; (S)-tetrahydrodipicolinate from L-aspartate: step 3/4. Its function is as follows. Catalyzes the condensation of (S)-aspartate-beta-semialdehyde [(S)-ASA] and pyruvate to 4-hydroxy-tetrahydrodipicolinate (HTPA). The sequence is that of 4-hydroxy-tetrahydrodipicolinate synthase from Shigella boydii serotype 18 (strain CDC 3083-94 / BS512).